A 344-amino-acid chain; its full sequence is Oxygen sensor histidine kinase NreB (344 aa).

Residues C58, C61, C73, and C76 each contribute to the [4Fe-4S] cluster site. Residues 152 to 344 (RISRELHDSV…GTNVTLNIPI (193 aa)) form the Histidine kinase domain. H158 bears the Phosphohistidine; by autocatalysis mark.

The cofactor is [4Fe-4S] cluster. Post-translationally, autophosphorylated.

The protein localises to the cytoplasm. The catalysed reaction is ATP + protein L-histidine = ADP + protein N-phospho-L-histidine.. Its function is as follows. Member of the two-component regulatory system NreB/NreC involved in the control of dissimilatory nitrate/nitrite reduction in response to oxygen. NreB functions as a direct oxygen sensor histidine kinase which is autophosphorylated, in the absence of oxygen, probably at the conserved histidine residue, and transfers its phosphate group probably to a conserved aspartate residue of NreC. NreB/NreC activates the expression of the nitrate (narGHJI) and nitrite (nir) reductase operons, as well as the putative nitrate transporter gene narT. This is Oxygen sensor histidine kinase NreB (nreB) from Staphylococcus aureus (strain Mu3 / ATCC 700698).